The primary structure comprises 189 residues: Putative manganese efflux pump MntP (189 aa).

6 helical membrane-spanning segments follow: residues 3–23, 41–61, 62–82, 103–123, 132–152, and 167–187; these read IVST…AAVS, MIFG…GRVA, ADYV…FLGI, SFIL…SVGV, IVPV…AGVM, and IIGG…HLYG.

The protein belongs to the MntP (TC 9.B.29) family.

The protein localises to the cell inner membrane. Probably functions as a manganese efflux pump. This is Putative manganese efflux pump MntP from Methylobacillus flagellatus (strain ATCC 51484 / DSM 6875 / VKM B-1610 / KT).